Reading from the N-terminus, the 480-residue chain is MNMHDFSKTKILVVGDVMLDQYWSGRAGRISPEAPVPVVKVADENVRAGGAANVALNIADLGADVNLMGVIGQDSFGQQLNQVLEQAGVASNWVYSESGTICKLRVLSHHQQLIRMDFENAVPELSAKSLAKLVAEKVADYDVLVISDYAKGALQFVEEMIQAAKSQQVPVLIDPKGNDFSRYAGATLVKPNQGEFELIVGVCADQDDLIEKAKQLIQEINIDALLVTRSEHGMALIEKDAGATILKSRAQEVFDVTGAGDTVIATLATAFGSGLSMPKSVKLANEAASIVVRKVGTSTVSKVELEEQLNASMRHQGYASMSEDEVHSLVQIAQSKGEKVVFTNGCFDLLHSGHVRYLNEAARQGDRLVVAVNSDESVKLLKGDSRPIVELAGRMELLSALSCVDWVVPFNEETPERLICKLAPDVLVKGGDYKPDEIAGAQCVWDKGGEVAVLSFWEGYSTTRMVDKIQEAEIKEGAAQ.

A ribokinase region spans residues 1–316 (MNMHDFSKTK…EQLNASMRHQ (316 aa)). 192-195 (NQGE) contacts ATP. Asp-261 is an active-site residue. Residues 342–480 (FTNGCFDLLH…EAEIKEGAAQ (139 aa)) form a cytidylyltransferase region.

It in the N-terminal section; belongs to the carbohydrate kinase PfkB family. In the C-terminal section; belongs to the cytidylyltransferase family. Homodimer.

The enzyme catalyses D-glycero-beta-D-manno-heptose 7-phosphate + ATP = D-glycero-beta-D-manno-heptose 1,7-bisphosphate + ADP + H(+). It carries out the reaction D-glycero-beta-D-manno-heptose 1-phosphate + ATP + H(+) = ADP-D-glycero-beta-D-manno-heptose + diphosphate. Its pathway is nucleotide-sugar biosynthesis; ADP-L-glycero-beta-D-manno-heptose biosynthesis; ADP-L-glycero-beta-D-manno-heptose from D-glycero-beta-D-manno-heptose 7-phosphate: step 1/4. The protein operates within nucleotide-sugar biosynthesis; ADP-L-glycero-beta-D-manno-heptose biosynthesis; ADP-L-glycero-beta-D-manno-heptose from D-glycero-beta-D-manno-heptose 7-phosphate: step 3/4. In terms of biological role, catalyzes the phosphorylation of D-glycero-D-manno-heptose 7-phosphate at the C-1 position to selectively form D-glycero-beta-D-manno-heptose-1,7-bisphosphate. Its function is as follows. Catalyzes the ADP transfer from ATP to D-glycero-beta-D-manno-heptose 1-phosphate, yielding ADP-D-glycero-beta-D-manno-heptose. In Hydrogenovibrio crunogenus (strain DSM 25203 / XCL-2) (Thiomicrospira crunogena), this protein is Bifunctional protein HldE.